The primary structure comprises 482 residues: 2-succinylbenzoate--CoA ligase (482 aa).

Belongs to the ATP-dependent AMP-binding enzyme family. MenE subfamily.

The catalysed reaction is 2-succinylbenzoate + ATP + CoA = 2-succinylbenzoyl-CoA + AMP + diphosphate. It participates in quinol/quinone metabolism; 1,4-dihydroxy-2-naphthoate biosynthesis; 1,4-dihydroxy-2-naphthoate from chorismate: step 5/7. Its pathway is quinol/quinone metabolism; menaquinone biosynthesis. Functionally, converts 2-succinylbenzoate (OSB) to 2-succinylbenzoyl-CoA (OSB-CoA). The sequence is that of 2-succinylbenzoate--CoA ligase from Bacillus cereus (strain AH820).